We begin with the raw amino-acid sequence, 408 residues long: 3-hydroxy-3-methylglutaryl-coenzyme A reductase (408 aa).

Residues Glu101 and Asp307 each act as charge relay system in the active site. His403 functions as the Proton donor in the catalytic mechanism.

The protein belongs to the HMG-CoA reductase family.

The catalysed reaction is (R)-mevalonate + 2 NADP(+) + CoA = (3S)-3-hydroxy-3-methylglutaryl-CoA + 2 NADPH + 2 H(+). It participates in metabolic intermediate biosynthesis; (R)-mevalonate biosynthesis; (R)-mevalonate from acetyl-CoA: step 3/3. In terms of biological role, converts HMG-CoA to mevalonate. In Pyrococcus abyssi (strain GE5 / Orsay), this protein is 3-hydroxy-3-methylglutaryl-coenzyme A reductase (hmgA).